Reading from the N-terminus, the 49-residue chain is DNA-directed RNA polymerase subunit Rpo12 (49 aa).

Positions 11, 27, and 30 each coordinate Zn(2+).

The protein belongs to the archaeal Rpo12/eukaryotic RPC10 RNA polymerase subunit family. Part of the RNA polymerase complex. Requires Zn(2+) as cofactor.

It localises to the cytoplasm. The catalysed reaction is RNA(n) + a ribonucleoside 5'-triphosphate = RNA(n+1) + diphosphate. In terms of biological role, DNA-dependent RNA polymerase (RNAP) catalyzes the transcription of DNA into RNA using the four ribonucleoside triphosphates as substrates. In Pyrococcus furiosus (strain ATCC 43587 / DSM 3638 / JCM 8422 / Vc1), this protein is DNA-directed RNA polymerase subunit Rpo12.